Consider the following 430-residue polypeptide: 4-hydroxy-3-methylbut-2-en-1-yl diphosphate synthase (flavodoxin) (430 aa).

Cys310, Cys313, Cys356, and Glu363 together coordinate [4Fe-4S] cluster.

This sequence belongs to the IspG family. The cofactor is [4Fe-4S] cluster.

It carries out the reaction (2E)-4-hydroxy-3-methylbut-2-enyl diphosphate + oxidized [flavodoxin] + H2O + 2 H(+) = 2-C-methyl-D-erythritol 2,4-cyclic diphosphate + reduced [flavodoxin]. The protein operates within isoprenoid biosynthesis; isopentenyl diphosphate biosynthesis via DXP pathway; isopentenyl diphosphate from 1-deoxy-D-xylulose 5-phosphate: step 5/6. Functionally, converts 2C-methyl-D-erythritol 2,4-cyclodiphosphate (ME-2,4cPP) into 1-hydroxy-2-methyl-2-(E)-butenyl 4-diphosphate. The sequence is that of 4-hydroxy-3-methylbut-2-en-1-yl diphosphate synthase (flavodoxin) from Nitrobacter winogradskyi (strain ATCC 25391 / DSM 10237 / CIP 104748 / NCIMB 11846 / Nb-255).